An 85-amino-acid polypeptide reads, in one-letter code: Small ribosomal subunit protein bS20 (85 aa).

Disordered regions lie at residues 1 to 25 and 62 to 85; these read MANI…ASIK and ARKG…QVNA.

This sequence belongs to the bacterial ribosomal protein bS20 family.

Its function is as follows. Binds directly to 16S ribosomal RNA. The sequence is that of Small ribosomal subunit protein bS20 from Bacillus cereus (strain G9842).